A 303-amino-acid chain; its full sequence is Large ribosomal subunit protein uL18 (303 aa).

Belongs to the universal ribosomal protein uL18 family. Component of the large ribosomal subunit (LSU).

It is found in the cytoplasm. It localises to the nucleus. Component of the ribosome, a large ribonucleoprotein complex responsible for the synthesis of proteins in the cell. The small ribosomal subunit (SSU) binds messenger RNAs (mRNAs) and translates the encoded message by selecting cognate aminoacyl-transfer RNA (tRNA) molecules. The large subunit (LSU) contains the ribosomal catalytic site termed the peptidyl transferase center (PTC), which catalyzes the formation of peptide bonds, thereby polymerizing the amino acids delivered by tRNAs into a polypeptide chain. The nascent polypeptides leave the ribosome through a tunnel in the LSU and interact with protein factors that function in enzymatic processing, targeting, and the membrane insertion of nascent chains at the exit of the ribosomal tunnel. This is Large ribosomal subunit protein uL18 (RPL5) from Oikopleura dioica (Tunicate).